We begin with the raw amino-acid sequence, 486 residues long: Ribulose bisphosphate carboxylase large chain 1 (486 aa).

Substrate contacts are provided by asparagine 125 and threonine 175. Lysine 177 serves as the catalytic Proton acceptor. Lysine 179 provides a ligand contact to substrate. Mg(2+) is bound by residues lysine 203, aspartate 205, and glutamate 206. Lysine 203 carries the post-translational modification N6-carboxylysine. The active-site Proton acceptor is the histidine 295. Arginine 296, histidine 328, and serine 380 together coordinate substrate.

It belongs to the RuBisCO large chain family. Type I subfamily. As to quaternary structure, heterohexadecamer of 8 large chains and 8 small chains. The cofactor is Mg(2+).

The enzyme catalyses 2 (2R)-3-phosphoglycerate + 2 H(+) = D-ribulose 1,5-bisphosphate + CO2 + H2O. The catalysed reaction is D-ribulose 1,5-bisphosphate + O2 = 2-phosphoglycolate + (2R)-3-phosphoglycerate + 2 H(+). In terms of biological role, ruBisCO catalyzes two reactions: the carboxylation of D-ribulose 1,5-bisphosphate, the primary event in carbon dioxide fixation, as well as the oxidative fragmentation of the pentose substrate. Both reactions occur simultaneously and in competition at the same active site. This chain is Ribulose bisphosphate carboxylase large chain 1, found in Cereibacter sphaeroides (strain ATCC 17025 / ATH 2.4.3) (Rhodobacter sphaeroides).